The primary structure comprises 559 residues: DNA ligase (559 aa).

Position 247 (Glu-247) interacts with ATP. The N6-AMP-lysine intermediate role is filled by Lys-249. The ATP site is built by Arg-254, Arg-269, Glu-299, Phe-339, Arg-414, and Lys-420.

Belongs to the ATP-dependent DNA ligase family. It depends on Mg(2+) as a cofactor.

The enzyme catalyses ATP + (deoxyribonucleotide)n-3'-hydroxyl + 5'-phospho-(deoxyribonucleotide)m = (deoxyribonucleotide)n+m + AMP + diphosphate.. In terms of biological role, DNA ligase that seals nicks in double-stranded DNA during DNA replication, DNA recombination and DNA repair. The chain is DNA ligase from Pyrococcus abyssi (strain GE5 / Orsay).